Reading from the N-terminus, the 399-residue chain is Probable endo-xylogalacturonan hydrolase A (399 aa).

A signal peptide spans 1–19 (MTFGKAAFLSFSLFGASWA). PbH1 repeat units lie at residues 177–207 (TTNA…DIGE), 208–229 (STYV…AFKP), 231–251 (CNYL…SVGS), 260–283 (VQNV…KTYP), and 293–314 (VTNV…QIQS). Aspartate 222 serves as the catalytic Proton donor. Residue histidine 245 is part of the active site. Residues asparagine 295 and asparagine 382 are each glycosylated (N-linked (GlcNAc...) asparagine).

It belongs to the glycosyl hydrolase 28 family.

It is found in the secreted. In terms of biological role, pectinolytic enzyme involved in the degradation of xylogalacturonan (xga), a galacturonan backbone heavily substituted with xylose, and which is one important component of the hairy regions of pectin. Activity requires a galacturonic acid backbone substituted with xylose. This is Probable endo-xylogalacturonan hydrolase A (xghA) from Emericella nidulans (strain FGSC A4 / ATCC 38163 / CBS 112.46 / NRRL 194 / M139) (Aspergillus nidulans).